We begin with the raw amino-acid sequence, 274 residues long: Protein FRG1 homolog (274 aa).

The Nuclear localization signal motif lies at K20–D36. The interval G27–V46 is disordered. Positions N34–P43 are enriched in basic and acidic residues. The Bipartite nuclear localization signal signature appears at Q252–M268.

Belongs to the FRG1 family.

Its subcellular location is the nucleus. The protein resides in the cajal body. It is found in the nucleolus. It localises to the cytoplasm. In terms of biological role, binds to mRNA in a sequence-independent manner. May play a role in regulation of pre-mRNA splicing or in the assembly of rRNA into ribosomal subunits. May be involved in mRNA transport. May be involved in epigenetic regulation of muscle differentiation through regulation of activity of the histone-lysine N-methyltransferase KMT5B. The chain is Protein FRG1 homolog (frg-1) from Caenorhabditis elegans.